Consider the following 550-residue polypeptide: Chaperonin GroEL (550 aa).

ATP contacts are provided by residues 30-33 (TLGP), lysine 51, 87-91 (DGTTT), glycine 415, and aspartate 496.

Belongs to the chaperonin (HSP60) family. As to quaternary structure, forms a cylinder of 14 subunits composed of two heptameric rings stacked back-to-back. Interacts with the co-chaperonin GroES.

Its subcellular location is the cytoplasm. It carries out the reaction ATP + H2O + a folded polypeptide = ADP + phosphate + an unfolded polypeptide.. In terms of biological role, together with its co-chaperonin GroES, plays an essential role in assisting protein folding. The GroEL-GroES system forms a nano-cage that allows encapsulation of the non-native substrate proteins and provides a physical environment optimized to promote and accelerate protein folding. The polypeptide is Chaperonin GroEL (Rickettsia prowazekii (strain Madrid E)).